Consider the following 565-residue polypeptide: uncharacterized protein (565 aa).

5 helical membrane passes run 14–34 (LAIF…IGKF), 36–56 (LGVV…DITV), 92–112 (MGFA…LAKI), 117–137 (VGEA…IGVA), and 157–177 (IIPV…AWVL). The region spanning 296 to 381 (PEVLDPQLLD…VDAAAKQLGY (86 aa)) is the RCK C-terminal domain. Transmembrane regions (helical) follow at residues 391–411 (MIFV…SIHM), 414–434 (VPIS…FGWL), 448–468 (ALWI…GIAA), 481–501 (LSLF…GILM), 508–530 (FHPA…LGAI), and 545–565 (VTYA…VLLM).

The protein belongs to the AAE transporter (TC 2.A.81) family.

It localises to the cell membrane. This is an uncharacterized protein from Bacteroides fragilis (strain YCH46).